The chain runs to 458 residues: Elongation factor 1-alpha (458 aa).

Glycine 2 carries the n,N,N-trimethylglycine modification. Lysine 3 is modified (N6,N6-dimethyllysine; alternate). Residue lysine 3 is modified to N6-methyllysine; alternate. One can recognise a tr-type G domain in the interval lysine 5–serine 240. The segment at glycine 14 to serine 21 is G1. Residue glycine 14–serine 21 coordinates GTP. Lysine 30 bears the N6-methyllysine mark. The interval glycine 70–aspartate 74 is G2. Lysine 79 bears the N6,N6,N6-trimethyllysine mark. A G3 region spans residues aspartate 91–glycine 94. GTP-binding positions include aspartate 91–histidine 95 and asparagine 153–aspartate 156. Residues asparagine 153–aspartate 156 are G4. A G5 region spans residues serine 192–tryptophan 194. An N6,N6-dimethyllysine; alternate modification is found at lysine 316. The residue at position 316 (lysine 316) is an N6-methyllysine; alternate. Lysine 390 carries the N6-methyllysine modification.

It belongs to the TRAFAC class translation factor GTPase superfamily. Classic translation factor GTPase family. EF-Tu/EF-1A subfamily.

The protein localises to the cytoplasm. In terms of biological role, this protein promotes the GTP-dependent binding of aminoacyl-tRNA to the A-site of ribosomes during protein biosynthesis. The protein is Elongation factor 1-alpha (TEF-1) of Absidia glauca (Pin mould).